Reading from the N-terminus, the 220-residue chain is Putative O-methyltransferase Mmcs_3995 (220 aa).

S-adenosyl-L-methionine is bound by residues valine 47, glutamate 69, 71–72 (GT), serine 77, aspartate 95, and valine 96. Aspartate 143 contacts substrate. S-adenosyl-L-methionine is bound at residue aspartate 145.

This sequence belongs to the class I-like SAM-binding methyltransferase superfamily. Cation-dependent O-methyltransferase family.

This is Putative O-methyltransferase Mmcs_3995 from Mycobacterium sp. (strain MCS).